The chain runs to 565 residues: DNA-binding protein scr1 (565 aa).

A compositionally biased stretch (polar residues) spans Met1–Asn19. Residues Met1–Pro25 form a disordered region. C2H2-type zinc fingers lie at residues Tyr26–His48 and His54–His78. Disordered regions lie at residues Thr79 to Thr119, Ser261 to Ser303, Arg390 to Ser434, and Ala466 to Pro565. A compositionally biased stretch (low complexity) spans Asn80–Ser102. Polar residues-rich tracts occupy residues Glu108–Thr119, Leu276–His286, and Gly294–Ser303. Over residues Pro391–Pro413 the composition is skewed to low complexity. Positions Ala466–Pro478 are enriched in polar residues. 3 stretches are compositionally biased toward low complexity: residues Ser479 to Ser492, Phe517 to Ser526, and Ser537 to Ser555.

It belongs to the creA/MIG C2H2-type zinc-finger protein family.

The protein resides in the nucleus. Functionally, involved in carbon catabolite repression. Represses the transcription of various genes including the inv1 gene. The protein is DNA-binding protein scr1 (scr1) of Schizosaccharomyces pombe (strain 972 / ATCC 24843) (Fission yeast).